The primary structure comprises 1050 residues: Valine--tRNA ligase (1050 aa).

Residues 37–57 (EKKAAASDKPVKEAKAKKEQT) show a composition bias toward basic and acidic residues. Residues 37–72 (EKKAAASDKPVKEAKAKKEQTVEAAEPVDQTPTGQR) are disordered. The short motif at 127 to 137 (PNVTGNLHVGH) is the 'HIGH' region element. A 'KMSKS' region motif is present at residues 642-646 (KMSKS). K645 contacts ATP.

Belongs to the class-I aminoacyl-tRNA synthetase family.

It carries out the reaction tRNA(Val) + L-valine + ATP = L-valyl-tRNA(Val) + AMP + diphosphate. The protein is Valine--tRNA ligase of Caenorhabditis elegans.